Consider the following 552-residue polypeptide: Macrophage colony-stimulating factor 1 (552 aa).

Residues 1 to 32 (MTARGAAGRCPSSTWLGSRLLLVCLLMSRSIA) form the signal peptide. The Extracellular portion of the chain corresponds to 33-492 (KEVSEHCSHM…EGSSDPQIPE (460 aa)). 3 disulfide bridges follow: Cys-39–Cys-122, Cys-80–Cys-171, and Cys-134–Cys-178. N-linked (GlcNAc...) asparagine glycosylation is found at Asn-107, Asn-154, and Asn-172. Positions 197-207 (TPSSDPASASP) are enriched in low complexity. Residues 197-293 (TPSSDPASAS…GGPVPGVEDI (97 aa)) form a disordered region. Positions 254–267 (PRSTCQTLESTEQP) are enriched in polar residues. The span at 268–278 (NHGDRLTEDSQ) shows a compositional bias: basic and acidic residues. Ser-308 carries O-linked (Xyl...) (chondroitin sulfate) serine glycosylation. Disordered regions lie at residues 321-412 (KFSP…RVSN) and 439-465 (GKRS…ARPV). 3 stretches are compositionally biased toward basic and acidic residues: residues 350-364 (STED…DRPL), 382-396 (EKTD…DHQE), and 439-450 (GKRSTRDRRSPA). O-linked (GalNAc...) threonine glycosylation occurs at Thr-360. The helical transmembrane segment at 493 to 515 (SVFHLLVPGIILVLLTVGGLLFY) threads the bilayer. Residues 516–552 (KWKWRSHRDPQTLDSSVGRPEDSSLTQDEDRQVELPV) are Cytoplasmic-facing. Positions 525–552 (PQTLDSSVGRPEDSSLTQDEDRQVELPV) are disordered. Residues 543 to 552 (DEDRQVELPV) show a composition bias toward basic and acidic residues.

In terms of assembly, homodimer or heterodimer; disulfide-linked. Likely to exist in multiple forms: homodimer consisting of 2 identical 150-200 kDa proteoglycan subunits, heterodimer consisting of a 150-200 kDa proteoglycan subunit and a truncated 43 kDa subunit, and homodimer consisting of 2 identical 43 kDa subunits. Interacts with CSF1R. Post-translationally, N-glycosylated. O-glycosylated; contains chondroitin sulfate.

It is found in the cell membrane. The protein localises to the secreted. The protein resides in the extracellular space. Cytokine that plays an essential role in the regulation of survival, proliferation and differentiation of hematopoietic precursor cells, especially mononuclear phagocytes, such as macrophages and monocytes. Promotes the release of pro-inflammatory chemokines, and thereby plays an important role in innate immunity and in inflammatory processes. Plays an important role in the regulation of osteoclast proliferation and differentiation, the regulation of bone resorption, and is required for normal bone development. Required for normal male and female fertility. Promotes reorganization of the actin cytoskeleton, regulates formation of membrane ruffles, cell adhesion and cell migration. Plays a role in lipoprotein clearance. The chain is Macrophage colony-stimulating factor 1 (Csf1) from Mus musculus (Mouse).